A 412-amino-acid polypeptide reads, in one-letter code: Fringe glycosyltransferase (412 aa).

At 1–15 (MMSLTVLSPPQRFKR) the chain is on the cytoplasmic side. Residues 16–34 (ILQAMMLAVAVVYMTLLLY) form a helical; Signal-anchor for type II membrane protein membrane-spanning segment. Residues 35–412 (QSAYGYPGIQ…FPYFSFCPPR (378 aa)) are Lumenal-facing. Position 164 (Arg-164) interacts with substrate. 2 cysteine pairs are disulfide-bonded: Cys-204–Cys-215 and Cys-233–Cys-297. Asp-237 lines the substrate pocket. Asp-238 is a binding site for Mn(2+). Residue Asp-327 is part of the active site. His-351 is a binding site for Mn(2+). Cys-400 and Cys-409 are oxidised to a cystine.

It belongs to the glycosyltransferase 31 family. Requires Mn(2+) as cofactor. Expressed in dorsal cells.

It localises to the golgi apparatus membrane. The catalysed reaction is 3-O-(alpha-L-fucosyl)-L-threonyl-[EGF-like domain protein] + UDP-N-acetyl-alpha-D-glucosamine = 3-O-(N-acetyl-beta-D-glucosaminyl-(1-&gt;3)-alpha-L-fucosyl)-L-threonyl-[EGF-like domain protein] + UDP + H(+). It carries out the reaction 3-O-(alpha-L-fucosyl)-L-seryl-[EGF-like domain protein] + UDP-N-acetyl-alpha-D-glucosamine = 3-O-(N-acetyl-beta-D-glucosaminyl-(1-&gt;3)-alpha-L-fucosyl)-L-seryl-[EGF-like domain protein] + UDP + H(+). Functionally, glycosyltransferase involved in the elongation of O-linked ligands to activate Notch signaling. Possesses fucose-specific beta-1,3-N-acetylglucosaminyltransferase activity; extends the O-linked fucose on the Notch EGF repeats. Boundary-specific cell-signaling molecule that is responsible for dorsal-ventral cell interactions during wing development. This is Fringe glycosyltransferase (fng) from Drosophila melanogaster (Fruit fly).